The following is a 414-amino-acid chain: Alanine--glyoxylate aminotransferase (414 aa).

The N-terminal 23 residues, 1-23 (MFRMLAKASVTLGSRAASWVRNM), are a transit peptide targeting the mitochondrion. Position 231 is an N6-(pyridoxal phosphate)lysine (K231). At K247 the chain carries N6-acetyllysine; alternate. K247 bears the N6-succinyllysine; alternate mark. K256 and K334 each carry N6-acetyllysine. R382 is a binding site for substrate. The Microbody targeting signal motif lies at 412–414 (NKL).

It belongs to the class-V pyridoxal-phosphate-dependent aminotransferase family. Homodimer. It depends on pyridoxal 5'-phosphate as a cofactor.

It is found in the peroxisome. The protein localises to the mitochondrion matrix. It carries out the reaction L-serine + pyruvate = 3-hydroxypyruvate + L-alanine. The enzyme catalyses glyoxylate + L-alanine = glycine + pyruvate. Catalyzes the transamination of glyoxylate to glycine and contributes to the glyoxylate detoxification. In terms of biological role, catalyzes the transamination between L-serine and pyruvate and weakly contributes to gluconeogenesis from the L-serine metabolism. This Rattus norvegicus (Rat) protein is Alanine--glyoxylate aminotransferase.